Reading from the N-terminus, the 943-residue chain is Neutral alpha-glucosidase AB (943 aa).

Residues 1–23 form the signal peptide; sequence MRKLVILIILSIVCSLFIGSIES. A disordered region spans residues 186 to 231; sequence FEPISDKPQPLPPKEKKSEEENKEANQEEDNNNNNNDNNEEQQVST. Residues 198 to 211 show a composition bias toward basic and acidic residues; that stretch reads PKEKKSEEENKEAN. The active-site Nucleophile is Asp540. Residue Glu543 is part of the active site. The active-site Proton donor is the Asp617. N-linked (GlcNAc...) asparagine glycans are attached at residues Asn878, Asn887, and Asn907.

This sequence belongs to the glycosyl hydrolase 31 family.

The protein localises to the endoplasmic reticulum. It is found in the golgi apparatus. It catalyses the reaction N(4)-(alpha-D-Glc-(1-&gt;3)-alpha-D-Man-(1-&gt;2)-alpha-D-Man-(1-&gt;2)-alpha-D-Man-(1-&gt;3)-[alpha-D-Man-(1-&gt;2)-alpha-D-Man-(1-&gt;3)-[alpha-D-Man-(1-&gt;2)-alpha-D-Man-(1-&gt;6)]-alpha-D-Man-(1-&gt;6)]-beta-D-Man-(1-&gt;4)-beta-D-GlcNAc-(1-&gt;4)-beta-D-GlcNAc)-L-asparaginyl-[protein] + H2O = N(4)-(alpha-D-Man-(1-&gt;2)-alpha-D-Man-(1-&gt;2)-alpha-D-Man-(1-&gt;3)-[alpha-D-Man-(1-&gt;2)-alpha-D-Man-(1-&gt;3)-[alpha-D-Man-(1-&gt;2)-alpha-D-Man-(1-&gt;6)]-alpha-D-Man-(1-&gt;6)]-beta-D-Man-(1-&gt;4)-beta-D-GlcNAc-(1-&gt;4)-beta-D-GlcNAc)-L-asparaginyl-[protein] (N-glucan mannose isomer 9A1,2,3B1,2,3) + beta-D-glucose. The enzyme catalyses N(4)-(alpha-D-Glc-(1-&gt;3)-alpha-D-Glc-(1-&gt;3)-alpha-D-Man-(1-&gt;2)-alpha-D-Man-(1-&gt;2)-alpha-D-Man-(1-&gt;3)-[alpha-D-Man-(1-&gt;2)-alpha-D-Man-(1-&gt;3)-[alpha-D-Man-(1-&gt;2)-alpha-D-Man-(1-&gt;6)]-alpha-D-Man-(1-&gt;6)]-beta-D-Man-(1-&gt;4)-beta-D-GlcNAc-(1-&gt;4)-beta-D-GlcNAc)-L-asparaginyl-[protein] + H2O = N(4)-(alpha-D-Glc-(1-&gt;3)-alpha-D-Man-(1-&gt;2)-alpha-D-Man-(1-&gt;2)-alpha-D-Man-(1-&gt;3)-[alpha-D-Man-(1-&gt;2)-alpha-D-Man-(1-&gt;3)-[alpha-D-Man-(1-&gt;2)-alpha-D-Man-(1-&gt;6)]-alpha-D-Man-(1-&gt;6)]-beta-D-Man-(1-&gt;4)-beta-D-GlcNAc-(1-&gt;4)-beta-D-GlcNAc)-L-asparaginyl-[protein] + beta-D-glucose. It functions in the pathway glycan metabolism; N-glycan metabolism. Its function is as follows. Cleaves sequentially the 2 innermost alpha-1,3-linked glucose residues from N-linked oligosaccharides on newly synthesized glycoproteins. The polypeptide is Neutral alpha-glucosidase AB (modA) (Dictyostelium discoideum (Social amoeba)).